The primary structure comprises 425 residues: Serine--tRNA ligase (425 aa).

A disordered region spans residues 41–70 (TERSQLQARSNQVGKQVGEKIKSGSDPKGT). Polar residues predominate over residues 44–54 (SQLQARSNQVG). Residues 57–70 (VGEKIKSGSDPKGT) show a composition bias toward basic and acidic residues. Residue 234–236 (TSE) coordinates L-serine. Residue 265–267 (RRE) participates in ATP binding. Glu288 is an L-serine binding site. An ATP-binding site is contributed by 352 to 355 (EISS). Ser388 lines the L-serine pocket.

The protein belongs to the class-II aminoacyl-tRNA synthetase family. Type-1 seryl-tRNA synthetase subfamily. In terms of assembly, homodimer. The tRNA molecule binds across the dimer.

It is found in the cytoplasm. It catalyses the reaction tRNA(Ser) + L-serine + ATP = L-seryl-tRNA(Ser) + AMP + diphosphate + H(+). The enzyme catalyses tRNA(Sec) + L-serine + ATP = L-seryl-tRNA(Sec) + AMP + diphosphate + H(+). It functions in the pathway aminoacyl-tRNA biosynthesis; selenocysteinyl-tRNA(Sec) biosynthesis; L-seryl-tRNA(Sec) from L-serine and tRNA(Sec): step 1/1. Catalyzes the attachment of serine to tRNA(Ser). Is also able to aminoacylate tRNA(Sec) with serine, to form the misacylated tRNA L-seryl-tRNA(Sec), which will be further converted into selenocysteinyl-tRNA(Sec). This Trichodesmium erythraeum (strain IMS101) protein is Serine--tRNA ligase.